The following is a 65-amino-acid chain: 7 kDa A-type inclusion protein (65 aa).

Residues 1 to 20 (MSNQNIPQLSEYQTSVSQVA) are compositionally biased toward polar residues. A disordered region spans residues 1-32 (MSNQNIPQLSEYQTSVSQVAVTPPPKPKTPQI).

In Bos taurus (Bovine), this protein is 7 kDa A-type inclusion protein.